The chain runs to 340 residues: Cytosolic Fe-S cluster assembly factor NBP35 (340 aa).

Residues 1–41 (MPSLVDPVANKTDEGNNRTDLKAPEPEHCPGTESEEAGKAD) form a disordered region. Residues 11-30 (KTDEGNNRTDLKAPEPEHCP) show a composition bias toward basic and acidic residues. Residues cysteine 29, cysteine 43, cysteine 46, and cysteine 52 each contribute to the [4Fe-4S] cluster site. 82–89 (GKGGVGKS) is an ATP binding site. Residues cysteine 255 and cysteine 258 each contribute to the [4Fe-4S] cluster site.

This sequence belongs to the Mrp/NBP35 ATP-binding proteins family. NUBP1/NBP35 subfamily. Heterotetramer of 2 NBP35 and 2 CFD1 chains. [4Fe-4S] cluster serves as cofactor.

The protein localises to the cytoplasm. The protein resides in the nucleus. In terms of biological role, component of the cytosolic iron-sulfur (Fe/S) protein assembly (CIA) machinery. Required for maturation of extramitochondrial Fe-S proteins. The NBP35-CFD1 heterotetramer forms a Fe-S scaffold complex, mediating the de novo assembly of an Fe-S cluster and its transfer to target apoproteins. Required for biogenesis and export of both ribosomal subunits, which may reflect a role in assembly of the Fe/S clusters in RLI1, a protein which performs rRNA processing and ribosome export. The protein is Cytosolic Fe-S cluster assembly factor NBP35 of Yarrowia lipolytica (strain CLIB 122 / E 150) (Yeast).